The sequence spans 789 residues: Probable phosphoketolase (789 aa).

It belongs to the XFP family. Requires thiamine diphosphate as cofactor.

This chain is Probable phosphoketolase, found in Brucella abortus (strain 2308).